The sequence spans 399 residues: Subtilisin-like protease 4 (399 aa).

The N-terminal stretch at 1–19 (MVCLKTLSVFLAAFAAADA) is a signal peptide. Residues 20–118 (RAVFKTQGHK…VEQDQVVRIS (99 aa)) constitute a propeptide that is removed on maturation. One can recognise an Inhibitor I9 domain in the interval 38–117 (YIVVMKDGVS…YVEQDQVVRI (80 aa)). Asparagine 102 carries an N-linked (GlcNAc...) asparagine glycan. The 272-residue stretch at 128 to 399 (SWGLGRVSHR…NRLLYNGSGQ (272 aa)) folds into the Peptidase S8 domain. Catalysis depends on charge relay system residues aspartate 160 and histidine 191. N-linked (GlcNAc...) asparagine glycans are attached at residues asparagine 252 and asparagine 308. The active-site Charge relay system is serine 346. N-linked (GlcNAc...) asparagine glycosylation is present at asparagine 395.

It belongs to the peptidase S8 family.

It localises to the secreted. Functionally, secreted subtilisin-like serine protease with keratinolytic activity that contributes to pathogenicity. This is Subtilisin-like protease 4 (SUB4) from Trichophyton rubrum (Athlete's foot fungus).